Reading from the N-terminus, the 350-residue chain is 2-oxoglutarate-dependent ethylene/succinate-forming enzyme (350 aa).

The 121-residue stretch at glycine 166–proline 286 folds into the Fe2OG dioxygenase domain. Residues histidine 189 and histidine 268 each contribute to the Fe cation site.

It belongs to the iron/ascorbate-dependent oxidoreductase family. Monomer. Requires Fe(2+) as cofactor.

It carries out the reaction 2-oxoglutarate + O2 + 2 H(+) = ethene + 3 CO2 + H2O. The catalysed reaction is L-arginine + 2-oxoglutarate + O2 = guanidine + L-glutamate 5-semialdehyde + succinate + CO2. The protein operates within alkene biosynthesis; ethylene biosynthesis via 2-oxoglutarate. Its function is as follows. Simultaneously catalyzes two reactions, namely formation of ethylene and of succinate from 2-oxoglutarate. The chain is 2-oxoglutarate-dependent ethylene/succinate-forming enzyme (efe) from Pseudomonas amygdali pv. sesami (Pseudomonas syringae pv. sesami).